We begin with the raw amino-acid sequence, 227 residues long: MGAVMGTFSSLQTKQRRPSKDIAWWYYQYQRDKIEDDLEMTMVCHRPEGLEQLEAQTNFTKRELQVLYRGFKNECPSGVVNEETFKQIYAQFFPHGDASTYAHYLFNAFDTTQTGSVKFEDFVTALSILLRGTVHEKLRWTFNLYDINKDGYINKEEMMDIVKAIYDMMGKYTYPVLKEDTPRQHVDVFFQKMDKNKDGIVTLDEFLESCQEDDNIMRSLQLFQNVM.

The region spanning 38–94 (LEMTMVCHRPEGLEQLEAQTNFTKRELQVLYRGFKNECPSGVVNEETFKQIYAQFFP) is the EF-hand 1; degenerate domain. 3 consecutive EF-hand domains span residues 97-132 (DAST…LLRG), 133-168 (TVHE…IYDM), and 181-216 (TPRQ…DDNI). Ca(2+) is bound by residues D146, N148, D150, Y152, E157, D194, N196, D198, and E205. The segment at 214–227 (DNIMRSLQLFQNVM) is interaction with KCND2.

The protein belongs to the recoverin family. As to quaternary structure, component of heteromultimeric potassium channels. Identified in potassium channel complexes containing KCND1, KCND2, KCND3, KCNIP1, KCNIP2, KCNIP3, KCNIP4, DPP6 and DPP10. Part of a heterooctamer composed of the tetrameric channel and four KCNIP1 chains. Probably part of a complex consisting of KCNIP1, KCNIP2 isoform 3 and KCND2. Self-associates to form homodimers and homotetramers. Interacts with KCNIP2 isoform 3 in a calcium-dependent manner. Interacts with KCND2; this interaction mediates the capture of both the N- and C-terminus of KCND2, thus preventing KCND2 N-type inactivation and modulates the channel gating kinetics. Interacts with KCND3; each KCNIP1 monomer interacts with two adjacent KCND3 subunits, through both the N-terminal inactivation ball of a KCND3 subunit and a C-terminal helix from the adjacent KCND3 subunit, clamping them together; this interaction stabilizes the tetrameric form and modulates the channel gating kinetics namely channel activation and inactivation kinetics and rate of recovery from inactivation. Detected in hippocampus and in the molecular layer of the dentate gyrus (at protein level). Isoform 1 and isoform 2 are predominantly expressed at equal levels in brain. Colocalizes with KCND3 in inhibitory interneurons in cortex and hippocampus and in striatal interneurons.

It is found in the cell membrane. Its subcellular location is the cytoplasm. It localises to the cell projection. The protein resides in the dendrite. In terms of biological role, regulatory subunit of Kv4/D (Shal)-type voltage-gated rapidly inactivating A-type potassium channels. Regulates channel density, inactivation kinetics and rate of recovery from inactivation in a calcium-dependent and isoform-specific manner. Modulates KCND2/Kv4.2 currents. In vitro, modulates KCND1/Kv4.1 currents. Increases the presence of KCND2 at the cell surface. The protein is A-type potassium channel modulatory protein KCNIP1 of Rattus norvegicus (Rat).